Here is a 455-residue protein sequence, read N- to C-terminus: Bifunctional protein GlmU (455 aa).

A pyrophosphorylase region spans residues 1–226; sequence MSLEIVILAA…PMEVQGANDR (226 aa). UDP-N-acetyl-alpha-D-glucosamine is bound by residues 8 to 11, Lys-22, Gln-73, 78 to 79, 99 to 101, Gly-136, Glu-151, Asn-166, and Asn-224; these read LAAG, GT, and YGD. Asp-101 is a Mg(2+) binding site. Asn-224 contributes to the Mg(2+) binding site. Residues 227 to 247 form a linker region; that stretch reads KQLSELERHYQLRAGRRLMAQ. Residues 248 to 455 are N-acetyltransferase; sequence GVTLRDPARF…WKRPEKIKKN (208 aa). 2 residues coordinate UDP-N-acetyl-alpha-D-glucosamine: Arg-330 and Lys-348. The Proton acceptor role is filled by His-360. 2 residues coordinate UDP-N-acetyl-alpha-D-glucosamine: Tyr-363 and Asn-374. Acetyl-CoA-binding positions include Ala-377, 383-384, Ser-402, Ala-420, and Arg-437; that span reads NY.

It in the N-terminal section; belongs to the N-acetylglucosamine-1-phosphate uridyltransferase family. In the C-terminal section; belongs to the transferase hexapeptide repeat family. Homotrimer. Requires Mg(2+) as cofactor.

It is found in the cytoplasm. It catalyses the reaction alpha-D-glucosamine 1-phosphate + acetyl-CoA = N-acetyl-alpha-D-glucosamine 1-phosphate + CoA + H(+). It carries out the reaction N-acetyl-alpha-D-glucosamine 1-phosphate + UTP + H(+) = UDP-N-acetyl-alpha-D-glucosamine + diphosphate. The protein operates within nucleotide-sugar biosynthesis; UDP-N-acetyl-alpha-D-glucosamine biosynthesis; N-acetyl-alpha-D-glucosamine 1-phosphate from alpha-D-glucosamine 6-phosphate (route II): step 2/2. It participates in nucleotide-sugar biosynthesis; UDP-N-acetyl-alpha-D-glucosamine biosynthesis; UDP-N-acetyl-alpha-D-glucosamine from N-acetyl-alpha-D-glucosamine 1-phosphate: step 1/1. Its pathway is bacterial outer membrane biogenesis; LPS lipid A biosynthesis. In terms of biological role, catalyzes the last two sequential reactions in the de novo biosynthetic pathway for UDP-N-acetylglucosamine (UDP-GlcNAc). The C-terminal domain catalyzes the transfer of acetyl group from acetyl coenzyme A to glucosamine-1-phosphate (GlcN-1-P) to produce N-acetylglucosamine-1-phosphate (GlcNAc-1-P), which is converted into UDP-GlcNAc by the transfer of uridine 5-monophosphate (from uridine 5-triphosphate), a reaction catalyzed by the N-terminal domain. The chain is Bifunctional protein GlmU from Pseudomonas fluorescens (strain Pf0-1).